Reading from the N-terminus, the 612-residue chain is Proton pump-interactor 1 (612 aa).

The interval 1 to 58 (MGVEVVNSGGFEVAPAPFEGKPEKNGKLDQGKGDDAPINFGSVGELPKNAEENNNKVV) is disordered. Residues 20–35 (GKPEKNGKLDQGKGDD) are compositionally biased toward basic and acidic residues. Coiled coils occupy residues 90–113 (PKIK…RTGV) and 251–314 (LDGV…NSEY). 4 stretches are compositionally biased toward basic and acidic residues: residues 374–387 (LSRD…DEKP), 434–446 (EKAK…KNVA), 459–498 (PQKE…EKAA), and 505–519 (AQKE…EQEK). The disordered stretch occupies residues 374 to 572 (LSRDGRMRNP…PIRNRTRGRG (199 aa)). A coiled-coil region spans residues 466–526 (VDAATAKEMR…QEKKAKKKTG (61 aa)). Residues 531–545 (TETEEVPEASEEEIE) show a composition bias toward acidic residues. A Phosphoserine modification is found at Ser-540. Residues 549-564 (QEEKPQKEKVFKEKPI) show a composition bias toward basic and acidic residues. A helical membrane pass occupies residues 591 to 611 (VYAAPAALVVLLLLVLGYYYV).

Belongs to the plant Proton pump-interactor protein family. In terms of assembly, interacts with AHA1 via N-terminal region. As to expression, strongly expressed in root and shoot vascular systems, particularly in meristematic and sink tissues. Also present in pollen, stigmas and siliques, but not in developing embryos.

The protein localises to the cell membrane. It is found in the endoplasmic reticulum membrane. Its function is as follows. Promotes AHA1 plasma membrane ATPase activity by binding to a site different from the 14-3-3 binding site. The chain is Proton pump-interactor 1 (PPI1) from Arabidopsis thaliana (Mouse-ear cress).